Reading from the N-terminus, the 182-residue chain is ATP-dependent protease subunit HslV (182 aa).

Threonine 12 is a catalytic residue. Positions 167, 170, and 173 each coordinate Na(+).

It belongs to the peptidase T1B family. HslV subfamily. In terms of assembly, a double ring-shaped homohexamer of HslV is capped on each side by a ring-shaped HslU homohexamer. The assembly of the HslU/HslV complex is dependent on binding of ATP.

The protein localises to the cytoplasm. It catalyses the reaction ATP-dependent cleavage of peptide bonds with broad specificity.. With respect to regulation, allosterically activated by HslU binding. Protease subunit of a proteasome-like degradation complex believed to be a general protein degrading machinery. The chain is ATP-dependent protease subunit HslV from Chlorobium limicola (strain DSM 245 / NBRC 103803 / 6330).